Consider the following 346-residue polypeptide: NADH-ubiquinone oxidoreductase chain 2 (346 aa).

Helical transmembrane passes span 1–21, 25–45, 60–80, 95–115, 124–144, 149–169, 178–195, 200–219, 242–262, 274–294, and 326–346; these read MNPH…TITI, HWVL…PLIS, FLTQ…NAWA, CLLL…HFWF, LMTA…LLLM, LNPA…GWMG, ILAF…IILV, LALL…FMAL, ATLM…GFMP, EMTP…FFYL, and AILA…HAIV.

Belongs to the complex I subunit 2 family.

The protein resides in the mitochondrion inner membrane. It catalyses the reaction a ubiquinone + NADH + 5 H(+)(in) = a ubiquinol + NAD(+) + 4 H(+)(out). In terms of biological role, core subunit of the mitochondrial membrane respiratory chain NADH dehydrogenase (Complex I) that is believed to belong to the minimal assembly required for catalysis. Complex I functions in the transfer of electrons from NADH to the respiratory chain. The immediate electron acceptor for the enzyme is believed to be ubiquinone. This Sibirionetta formosa (Baikal teal) protein is NADH-ubiquinone oxidoreductase chain 2 (MT-ND2).